A 400-amino-acid polypeptide reads, in one-letter code: Acetylornithine aminotransferase (400 aa).

Residues 113–114 (GA) and phenylalanine 139 each bind pyridoxal 5'-phosphate. A N(2)-acetyl-L-ornithine-binding site is contributed by arginine 142. 224–227 (DEVQ) contacts pyridoxal 5'-phosphate. Position 253 is an N6-(pyridoxal phosphate)lysine (lysine 253). Serine 281 contributes to the N(2)-acetyl-L-ornithine binding site. Threonine 282 lines the pyridoxal 5'-phosphate pocket.

It belongs to the class-III pyridoxal-phosphate-dependent aminotransferase family. ArgD subfamily. Homodimer. It depends on pyridoxal 5'-phosphate as a cofactor.

It is found in the cytoplasm. It carries out the reaction N(2)-acetyl-L-ornithine + 2-oxoglutarate = N-acetyl-L-glutamate 5-semialdehyde + L-glutamate. The protein operates within amino-acid biosynthesis; L-arginine biosynthesis; N(2)-acetyl-L-ornithine from L-glutamate: step 4/4. The chain is Acetylornithine aminotransferase from Mycobacterium bovis (strain ATCC BAA-935 / AF2122/97).